The primary structure comprises 600 residues: Elongation factor 4 (600 aa).

A tr-type G domain is found at 4–186; sequence SKIRNFSIIA…AIVNKIPAPY (183 aa). GTP is bound by residues 16-21 and 133-136; these read DHGKST and NKVD.

Belongs to the TRAFAC class translation factor GTPase superfamily. Classic translation factor GTPase family. LepA subfamily.

The protein localises to the cell membrane. It catalyses the reaction GTP + H2O = GDP + phosphate + H(+). Required for accurate and efficient protein synthesis under certain stress conditions. May act as a fidelity factor of the translation reaction, by catalyzing a one-codon backward translocation of tRNAs on improperly translocated ribosomes. Back-translocation proceeds from a post-translocation (POST) complex to a pre-translocation (PRE) complex, thus giving elongation factor G a second chance to translocate the tRNAs correctly. Binds to ribosomes in a GTP-dependent manner. This is Elongation factor 4 from Mesoplasma florum (strain ATCC 33453 / NBRC 100688 / NCTC 11704 / L1) (Acholeplasma florum).